The following is a 551-amino-acid chain: MNLWQQNYDPAGNIWLSSLIASLPILFFFFALIKLKLKGYVAASWTVVIALAVALLFYKMPVDHALASVVYGFFYGLWPIAWIIIAAVFVYKISVKTGQFDIIRSSILSITPDQRLQMLIVGFCFGAFLEGAAGFGAPVAITAALLVGLGFNPLYAAGLCLIVNTAPVAFGAMGIPILVAGQVTDLDSFEIGQMVGRQLPFLTIIVLFWIMAIMDGWRGVKETWPAVMVAGGSFAIAQYLSSNFIGPELPDIISSLVSLVCLTLFLKRWQPVRIFRFGDMGASQVDQTLARTRYTTGQIVRAWSPFLFLTATVTLWSIPPFKALFAPGGALYDWVINVPVPYLDKLVARMPPVVHEATAYAAVYKFDWFSATGTAILFAALLSIVWLKMKPSAAIQTFGSTLKELALPIYSIGMVLAFAFISNYSGLSSTLALALAHTGSAFTFFSPFLGWLGVFLTGSDTSSNALFASLQATAAQQIGVSDVLMVAANTTGGVTGKMISPQSIAIACAAVGLVGKESDLFRFTVKHSLIFTCMVGVITTLQAYVLTWMIP.

12 consecutive transmembrane segments (helical) span residues 13-33 (NIWLSSLIASLPILFFFFALI), 37-57 (LKGYVAASWTVVIALAVALLF), 69-89 (VVYGFFYGLWPIAWIIIAAVF), 131-151 (GAAGFGAPVAITAALLVGLGF), 159-179 (LCLIVNTAPVAFGAMGIPILV), 194-214 (MVGRQLPFLTIIVLFWIMAIM), 245-265 (IGPELPDIISSLVSLVCLTLF), 306-326 (FLFLTATVTLWSIPPFKALFA), 366-386 (FDWFSATGTAILFAALLSIVW), 405-425 (LALPIYSIGMVLAFAFISNYS), 438-458 (TGSAFTFFSPFLGWLGVFLTG), and 530-550 (IFTCMVGVITTLQAYVLTWMI).

It belongs to the lactate permease family.

It is found in the cell inner membrane. It carries out the reaction (S)-lactate(in) + H(+)(in) = (S)-lactate(out) + H(+)(out). The enzyme catalyses (R)-lactate(in) + H(+)(in) = (R)-lactate(out) + H(+)(out). It catalyses the reaction glycolate(in) + H(+)(in) = glycolate(out) + H(+)(out). Uptake of L-lactate across the membrane. Can also transport D-lactate and glycolate. Seems to be driven by a proton motive force. In Salmonella typhi, this protein is L-lactate permease (lldP).